A 299-amino-acid chain; its full sequence is MAAAEGDGGVRAEADRELEELLESALDDFDKAKPSPAPPPTTTAPDASGPQKRSPGDTAKDALFASQEKFFQELFDSELASQATAEFEKAMKELAEEEPHLVEQFQKLSEAAGRVGSDATSQQEFTSCLKETLSGLAKNATDLQNSGMSEEELTKAMEGLGMDEGDGEGTILPIMQSIMQNLLSRDVLYPSLKEITEKYPEWLRAHRDSLPPEQFEKYQEQHSVMGKICEQFEAETPTDSEATQKARFEVVLDLMQQLQDLGHPPKELAGEMPPGLNFDLDALNLSGPPGANGEQCLIM.

The tract at residues methionine 1–leucine 63 is disordered. Alanine 2 carries the N-acetylalanine modification. A docking to the peroxisome membrane and binding to PEX3 region spans residues alanine 2–glycine 56. Positions alanine 2–methionine 91 are necessary for PEX19 function on peroxisome biogenesis. The span at arginine 16–aspartate 27 shows a compositional bias: acidic residues. Residues serine 35, serine 54, and serine 66 each carry the phosphoserine modification. Threonine 236 is subject to Phosphothreonine. Cysteine 296 bears the Cysteine methyl ester mark. The S-farnesyl cysteine moiety is linked to residue cysteine 296. The propeptide at leucine 297 to methionine 299 is removed in mature form.

It belongs to the peroxin-19 family. Interacts with a broad range of peroxisomal membrane proteins, including PEX3, PEX10, PEX11A, PEX11B, PEX12, PEX13, PEX14 and PEX16, PXMP2/PMP22, PXMP4/PMP24, SLC25A17/PMP34, ABCD1/ALDP, ABCD2/ALDRP, and ABCD3/PMP70. Also interacts with the tumor suppressor CDKN2A/p19ARF.

Its subcellular location is the cytoplasm. The protein localises to the peroxisome membrane. Its function is as follows. Necessary for early peroxisomal biogenesis. Acts both as a cytosolic chaperone and as an import receptor for peroxisomal membrane proteins (PMPs). Binds and stabilizes newly synthesized PMPs in the cytoplasm by interacting with their hydrophobic membrane-spanning domains, and targets them to the peroxisome membrane by binding to the integral membrane protein PEX3. Excludes CDKN2A from the nucleus and prevents its interaction with MDM2, which results in active degradation of TP53. The chain is Peroxisomal biogenesis factor 19 (PEX19) from Bos taurus (Bovine).